Reading from the N-terminus, the 306-residue chain is Cytochrome P450 monooxygenase aclO (306 aa).

Residue cysteine 237 coordinates heme.

The protein belongs to the cytochrome P450 family. The cofactor is heme.

Its pathway is mycotoxin biosynthesis. Cytochrome P450 monooxygenase; part of the gene cluster that mediates the biosynthesis of aspirochlorine (or antibiotic A30641), an unusual halogenated spiro compound with distinctive antifungal properties due to selective inhibition of protein biosynthesis, and which is also active against bacteria, viruses, and murine tumor cells. The non-ribosomal peptide synthetase (NRPS) aclP is responsible the formation of the diketopiperazine (DKP) core from the condensation of 2 phenylalanine residues. One Phe residue is tailored into chlorotyrosine by hydroxylation and chlorination, whereas the second Phe undergoes an unprecedented C-C bond cleavage to be converted into glycine. After formation of the DKP, sulfur is incorporated into the DKP by conjugation with glutathione by aclG, followed by its stepwise degradation to the thiol by aclI, aclJ and aclK, and the dithiol oxidation by aclT. In addition, oxygenases (aclB, aclC, aclL and aclO) and O-methyltransferases (aclM and aclU) act as tailoring enzymes to produce the intermediate dechloroaspirochlorine. Ultimately, chlorination of dechloroaspirochlorine by the halogenase aclH is the last step in the aspirochlorine pathway. This Aspergillus oryzae (strain ATCC 42149 / RIB 40) (Yellow koji mold) protein is Cytochrome P450 monooxygenase aclO.